The sequence spans 565 residues: Dihydroxy-acid dehydratase (565 aa).

Residue Cys-53 coordinates [2Fe-2S] cluster. Asp-85 contributes to the Mg(2+) binding site. Residue Cys-126 coordinates [2Fe-2S] cluster. The Mg(2+) site is built by Asp-127 and Lys-128. Lys-128 is subject to N6-carboxylysine. Cys-198 lines the [2Fe-2S] cluster pocket. A Mg(2+)-binding site is contributed by Glu-450. The active-site Proton acceptor is the Ser-476.

This sequence belongs to the IlvD/Edd family. In terms of assembly, homodimer. [2Fe-2S] cluster serves as cofactor. Requires Mg(2+) as cofactor.

The enzyme catalyses (2R)-2,3-dihydroxy-3-methylbutanoate = 3-methyl-2-oxobutanoate + H2O. It catalyses the reaction (2R,3R)-2,3-dihydroxy-3-methylpentanoate = (S)-3-methyl-2-oxopentanoate + H2O. It functions in the pathway amino-acid biosynthesis; L-isoleucine biosynthesis; L-isoleucine from 2-oxobutanoate: step 3/4. It participates in amino-acid biosynthesis; L-valine biosynthesis; L-valine from pyruvate: step 3/4. In terms of biological role, functions in the biosynthesis of branched-chain amino acids. Catalyzes the dehydration of (2R,3R)-2,3-dihydroxy-3-methylpentanoate (2,3-dihydroxy-3-methylvalerate) into 2-oxo-3-methylpentanoate (2-oxo-3-methylvalerate) and of (2R)-2,3-dihydroxy-3-methylbutanoate (2,3-dihydroxyisovalerate) into 2-oxo-3-methylbutanoate (2-oxoisovalerate), the penultimate precursor to L-isoleucine and L-valine, respectively. This chain is Dihydroxy-acid dehydratase, found in Synechococcus sp. (strain JA-2-3B'a(2-13)) (Cyanobacteria bacterium Yellowstone B-Prime).